Here is an 849-residue protein sequence, read N- to C-terminus: DNA mismatch repair protein MutS (849 aa).

Gly-665 to Ser-672 contributes to the ATP binding site.

The protein belongs to the DNA mismatch repair MutS family.

Its function is as follows. This protein is involved in the repair of mismatches in DNA. It is possible that it carries out the mismatch recognition step. This protein has a weak ATPase activity. The protein is DNA mismatch repair protein MutS of Wolbachia pipientis wMel.